A 449-amino-acid polypeptide reads, in one-letter code: Phosphoglucosamine mutase (449 aa).

Ser100 serves as the catalytic Phosphoserine intermediate. Mg(2+)-binding residues include Ser100, Asp241, Asp243, and Asp245. At Ser100 the chain carries Phosphoserine.

Belongs to the phosphohexose mutase family. Requires Mg(2+) as cofactor. Post-translationally, activated by phosphorylation.

The enzyme catalyses alpha-D-glucosamine 1-phosphate = D-glucosamine 6-phosphate. Catalyzes the conversion of glucosamine-6-phosphate to glucosamine-1-phosphate. In Caldicellulosiruptor saccharolyticus (strain ATCC 43494 / DSM 8903 / Tp8T 6331), this protein is Phosphoglucosamine mutase.